A 356-amino-acid chain; its full sequence is DNA polymerase IV (356 aa).

The UmuC domain occupies 7–187 (IIHVDMDAFY…LPVNRVPGVG (181 aa)). Mg(2+)-binding residues include Asp11 and Asp105. The active site involves Glu106.

This sequence belongs to the DNA polymerase type-Y family. As to quaternary structure, monomer. Mg(2+) is required as a cofactor.

The protein localises to the cytoplasm. It carries out the reaction DNA(n) + a 2'-deoxyribonucleoside 5'-triphosphate = DNA(n+1) + diphosphate. Poorly processive, error-prone DNA polymerase involved in untargeted mutagenesis. Copies undamaged DNA at stalled replication forks, which arise in vivo from mismatched or misaligned primer ends. These misaligned primers can be extended by PolIV. Exhibits no 3'-5' exonuclease (proofreading) activity. May be involved in translesional synthesis, in conjunction with the beta clamp from PolIII. This Stenotrophomonas maltophilia (strain R551-3) protein is DNA polymerase IV.